Consider the following 475-residue polypeptide: MSLTIAIVGRPNVGKSTLFNRLVGQKLALVDDKPGVTRDRRVHAATLQDLRFDVIDTAGLEETGDHTLEGRMRAHTKAAIDEADLILFVFDAKSGITPSDLNFASLVRKSGKPIVLVANKSESKAAIGGEYEAWSLGLGEPCSISAEHGLGLSDLRDAIMKASGGERIFASKNQEEHIALQSASLDDYIDNLEEKGDVYDKSKPLRIAVAGRPNTGKSTLINRMLGQDRLLTGPEAGLTRDSISVDWEWRGRHIKLFDTAGLRRKSKIQEKLEKLSVADTLRAIRFAEVVVIVFDATTPFEKQDLQIADLVIREGRVPLIAFNKWDLIENSQATLVDLHEKCIRLLPQVRGLRAVPLSGQYGQGIDKLMENVMMMHRVWNRRISTGKLNRWLETIVAHHPPPAVLGRRLKVKYVTQVKTRPPGFVFSCSRPKLMPQSYLRYLSNELRNTFDMPGIPIRISLRASDNPFATRSKKK.

EngA-type G domains lie at L3–R167 and L205–N380. Residues G9 to S16, D56 to L60, N119 to E122, G211 to S218, D258 to L262, and N323 to D326 each bind GTP. One can recognise a KH-like domain in the interval R381–D465.

Belongs to the TRAFAC class TrmE-Era-EngA-EngB-Septin-like GTPase superfamily. EngA (Der) GTPase family. In terms of assembly, associates with the 50S ribosomal subunit.

Functionally, GTPase that plays an essential role in the late steps of ribosome biogenesis. This chain is GTPase Der, found in Bartonella henselae (strain ATCC 49882 / DSM 28221 / CCUG 30454 / Houston 1) (Rochalimaea henselae).